Here is a 459-residue protein sequence, read N- to C-terminus: Endoglucanase CelA (459 aa).

A signal peptide spans M1–A27. The CBM2 domain occupies A28–S134. Cysteines 31 and 131 form a disulfide. The interval A129–T151 is disordered. A linker ('hinge') (Pro-Thr box) region spans residues T136–P147. A catalytic region spans residues A148–H357. The active-site Proton donor is the E286. E378 functions as the Nucleophile in the catalytic mechanism.

This sequence belongs to the glycosyl hydrolase 5 (cellulase A) family. Post-translationally, the linker region (also termed 'hinge') may be a potential site for proteolysis.

The enzyme catalyses Endohydrolysis of (1-&gt;4)-beta-D-glucosidic linkages in cellulose, lichenin and cereal beta-D-glucans.. This chain is Endoglucanase CelA (celA), found in Streptomyces lividans.